A 184-amino-acid chain; its full sequence is Ribosome maturation factor RimP (184 aa).

This sequence belongs to the RimP family.

Its subcellular location is the cytoplasm. In terms of biological role, required for maturation of 30S ribosomal subunits. The chain is Ribosome maturation factor RimP from Corynebacterium diphtheriae (strain ATCC 700971 / NCTC 13129 / Biotype gravis).